The chain runs to 717 residues: Fatty acid oxidation complex subunit alpha (717 aa).

An enoyl-CoA hydratase/isomerase region spans residues 1–190; the sequence is MIHAGNAITV…KDGAVDAVVA (190 aa). Residue Asp298 participates in substrate binding. The tract at residues 313 to 717 is 3-hydroxyacyl-CoA dehydrogenase; it reads HPVNQAAVLG…MAANNKKFYG (405 aa). NAD(+) is bound by residues Met326, Asp345, 402-404, Lys409, and Ser431; that span reads VTE. His452 (for 3-hydroxyacyl-CoA dehydrogenase activity) is an active-site residue. Asn455 contributes to the NAD(+) binding site. Substrate is bound at residue Asn502.

It in the N-terminal section; belongs to the enoyl-CoA hydratase/isomerase family. The protein in the C-terminal section; belongs to the 3-hydroxyacyl-CoA dehydrogenase family. As to quaternary structure, heterotetramer of two alpha chains (FadB) and two beta chains (FadA).

It carries out the reaction a (3S)-3-hydroxyacyl-CoA + NAD(+) = a 3-oxoacyl-CoA + NADH + H(+). The catalysed reaction is a (3S)-3-hydroxyacyl-CoA = a (2E)-enoyl-CoA + H2O. It catalyses the reaction a 4-saturated-(3S)-3-hydroxyacyl-CoA = a (3E)-enoyl-CoA + H2O. The enzyme catalyses (3S)-3-hydroxybutanoyl-CoA = (3R)-3-hydroxybutanoyl-CoA. It carries out the reaction a (3Z)-enoyl-CoA = a 4-saturated (2E)-enoyl-CoA. The catalysed reaction is a (3E)-enoyl-CoA = a 4-saturated (2E)-enoyl-CoA. Its pathway is lipid metabolism; fatty acid beta-oxidation. Functionally, involved in the aerobic and anaerobic degradation of long-chain fatty acids via beta-oxidation cycle. Catalyzes the formation of 3-oxoacyl-CoA from enoyl-CoA via L-3-hydroxyacyl-CoA. It can also use D-3-hydroxyacyl-CoA and cis-3-enoyl-CoA as substrate. The polypeptide is Fatty acid oxidation complex subunit alpha (Acinetobacter baumannii (strain ACICU)).